Here is a 213-residue protein sequence, read N- to C-terminus: dITP/XTP pyrophosphatase (213 aa).

A substrate-binding site is contributed by 17-22; that stretch reads SNNAGK. Positions 49 and 78 each coordinate Mg(2+). Asp78 serves as the catalytic Proton acceptor. Substrate is bound by residues Ser79, 164–167, Lys187, and 192–193; these read FGYD and HR.

The protein belongs to the HAM1 NTPase family. Homodimer. Mg(2+) serves as cofactor.

The enzyme catalyses XTP + H2O = XMP + diphosphate + H(+). The catalysed reaction is dITP + H2O = dIMP + diphosphate + H(+). It carries out the reaction ITP + H2O = IMP + diphosphate + H(+). Pyrophosphatase that catalyzes the hydrolysis of nucleoside triphosphates to their monophosphate derivatives, with a high preference for the non-canonical purine nucleotides XTP (xanthosine triphosphate), dITP (deoxyinosine triphosphate) and ITP. Seems to function as a house-cleaning enzyme that removes non-canonical purine nucleotides from the nucleotide pool, thus preventing their incorporation into DNA/RNA and avoiding chromosomal lesions. In Bordetella bronchiseptica (strain ATCC BAA-588 / NCTC 13252 / RB50) (Alcaligenes bronchisepticus), this protein is dITP/XTP pyrophosphatase.